Here is a 404-residue protein sequence, read N- to C-terminus: Serine/threonine transporter SstT (404 aa).

The next 8 membrane-spanning stretches (helical) occupy residues 17-37 (IGIG…LTGF), 39-59 (ILGK…VFAL), 75-95 (MTLI…VAVL), 138-158 (ALAT…GLAL), 179-199 (IVVW…FTTI), 212-232 (FLIL…NPLI), 287-307 (IPLG…VLTL), and 313-333 (FGIP…AVSA).

Belongs to the dicarboxylate/amino acid:cation symporter (DAACS) (TC 2.A.23) family.

Its subcellular location is the cell membrane. The catalysed reaction is L-serine(in) + Na(+)(in) = L-serine(out) + Na(+)(out). It carries out the reaction L-threonine(in) + Na(+)(in) = L-threonine(out) + Na(+)(out). Functionally, involved in the import of serine and threonine into the cell, with the concomitant import of sodium (symport system). This Streptococcus pyogenes serotype M5 (strain Manfredo) protein is Serine/threonine transporter SstT.